We begin with the raw amino-acid sequence, 57 residues long: Andropin (57 aa).

Residues 1 to 23 (MKYFVVLVVLALILAITVDPSDA) form the signal peptide.

The protein belongs to the andropin family. Ejaculatory duct of adult males.

It localises to the secreted. Male-specific peptide with moderate activity against Gram-positive bacteria. The chain is Andropin (Anp) from Drosophila sechellia (Fruit fly).